A 496-amino-acid chain; its full sequence is UDP-glycosyltransferase 84A2 (496 aa).

Histidine 23 serves as the catalytic Proton acceptor. An an anthocyanidin-binding site is contributed by histidine 23. The UDP-alpha-D-glucose site is built by glutamine 352, histidine 367, tryptophan 370, asparagine 371, serine 372, and glutamate 375. Glycine 390 is a binding site for an anthocyanidin. Aspartate 391 and glutamine 392 together coordinate UDP-alpha-D-glucose.

Belongs to the UDP-glycosyltransferase family. As to expression, expressed in roots, cotyledons, leaf veins and trichomes.

The enzyme catalyses (E)-sinapate + UDP-alpha-D-glucose = 1-O-(trans-sinapoyl)-beta-D-glucose + UDP. Sinapate glucosyltransferase (SGT) required for the biosynthesis of the glucose ester sinapoylglucose and subsequently sinapoylmalate and sinapoylcholine. Is the major SGT activity in plant. Plays an important role in sinapoylation of anthocyanins. Sinapoylglucose produced by UGT84A2 is a significant source of sinapoyl moieties for anthocyanins. Indole-3-butyric acid (IBA)-specific glucosyltransferase that catalyzes the glucosylation of the auxin IBA, but not indole-3-acetic acid (IAA). May be involved in flowering regulation through IBA-mediated transcriptional repression of the auxin-response factors ARF6 and ARF8 and downstream flowering pathway genes. Can glucosylate the phytotoxic xenobiotic compound 2,4,5-trichlorophenol (TCP). The polypeptide is UDP-glycosyltransferase 84A2 (Arabidopsis thaliana (Mouse-ear cress)).